The following is a 470-amino-acid chain: Sorting nexin-17 (470 aa).

The PX domain occupies 1 to 109 (MHFSIPETES…SFLRRAQQET (109 aa)). A 1,2-diacyl-sn-glycero-3-phospho-(1D-myo-inositol-3-phosphate) is bound by residues arginine 36, serine 38, lysine 62, and arginine 75. The Ras-associating domain occupies 115–206 (EEVSLEVLLS…YKIVLRKSYW (92 aa)). Residues 115-432 (EEVSLEVLLS…DASRESMVKL (318 aa)) are FERM-like. Residues 270–432 (GYLRFDACVA…DASRESMVKL (163 aa)) form a PTB-like F3 module region. 7 positions are modified to phosphoserine: serine 336, serine 407, serine 409, serine 415, serine 421, serine 437, and serine 440. A disordered region spans residues 400-426 (VGGTLRRSDSQQAVKSPPLLESPDASR).

Belongs to the sorting nexin family. Monomer. Interacts with APP (via cytoplasmic YXNPXY motif). Interacts with KIF1B. Interacts with the C-termini of P-selectin, PTC, LDLR, VLDLR, LRP1 and LRP8. Interacts with KRIT1 (via N-terminus). Interacts with HRAS. Interacts with ITGB1 and ITGB5 (via NPxY motif). Interacts with CCDC22 and CCDC93; the interaction associates SNX17 with the CCC complex. Interacts (via C-terminus) with VPS26C and VPS35L; the interactions are direct and associate SNX17 with the retriever complex.

It localises to the cytoplasm. The protein localises to the early endosome. It is found in the cytoplasmic vesicle membrane. Its function is as follows. Critical regulator of endosomal recycling of numerous surface proteins, including integrins, signaling receptor and channels. Binds to NPxY sequences in the cytoplasmic tails of target cargos. Associates with retriever and CCC complexes to prevent lysosomal degradation and promote cell surface recycling of numerous cargos such as integrins ITGB1, ITGB5 and their associated alpha subunits. Also required for maintenance of normal cell surface levels of APP and LRP1. Interacts with membranes containing phosphatidylinositol 3-phosphate (PtdIns(3P)). The sequence is that of Sorting nexin-17 (SNX17) from Bos taurus (Bovine).